The following is a 181-amino-acid chain: Protein Abitram (181 aa).

It belongs to the ABITRAM family. Interacts with F-actin. Interacts with G-actin.

The protein localises to the nucleus speckle. It localises to the cell projection. It is found in the lamellipodium. Its subcellular location is the nucleus. The protein resides in the growth cone. The protein localises to the dendrite. Actin-binding protein that regulates actin polymerization, filopodia dynamics and increases the branching of proximal dendrites of developing neurons. The chain is Protein Abitram from Homo sapiens (Human).